A 432-amino-acid polypeptide reads, in one-letter code: D-amino acid dehydrogenase (432 aa).

3 to 17 (VVILGSGVVGVTSAW) contributes to the FAD binding site.

It belongs to the DadA oxidoreductase family. It depends on FAD as a cofactor.

The protein localises to the cell inner membrane. The enzyme catalyses a D-alpha-amino acid + A + H2O = a 2-oxocarboxylate + AH2 + NH4(+). The protein operates within amino-acid degradation; D-alanine degradation; NH(3) and pyruvate from D-alanine: step 1/1. Oxidative deamination of D-amino acids. In Salmonella typhi, this protein is D-amino acid dehydrogenase.